A 201-amino-acid chain; its full sequence is Proteasome subunit beta type-2 (201 aa).

Residue M1 is modified to N-acetylmethionine.

It belongs to the peptidase T1B family. The 26S proteasome consists of a 20S proteasome core and two 19S regulatory subunits. The 20S proteasome core is a barrel-shaped complex made of 28 subunits that are arranged in four stacked rings. The two outer rings are each formed by seven alpha subunits, and the two inner rings are formed by seven beta subunits. The proteolytic activity is exerted by three beta-subunits PSMB5, PSMB6 and PSMB7. Detected in liver (at protein level).

The protein resides in the cytoplasm. Its subcellular location is the nucleus. Functionally, non-catalytic component of the 20S core proteasome complex involved in the proteolytic degradation of most intracellular proteins. This complex plays numerous essential roles within the cell by associating with different regulatory particles. Associated with two 19S regulatory particles, forms the 26S proteasome and thus participates in the ATP-dependent degradation of ubiquitinated proteins. The 26S proteasome plays a key role in the maintenance of protein homeostasis by removing misfolded or damaged proteins that could impair cellular functions, and by removing proteins whose functions are no longer required. Associated with the PA200 or PA28, the 20S proteasome mediates ubiquitin-independent protein degradation. This type of proteolysis is required in several pathways including spermatogenesis (20S-PA200 complex) or generation of a subset of MHC class I-presented antigenic peptides (20S-PA28 complex). In Mus musculus (Mouse), this protein is Proteasome subunit beta type-2 (Psmb2).